The following is a 560-amino-acid chain: Formate--tetrahydrofolate ligase (560 aa).

69 to 76 (TPAGEGKS) lines the ATP pocket.

This sequence belongs to the formate--tetrahydrofolate ligase family.

The enzyme catalyses (6S)-5,6,7,8-tetrahydrofolate + formate + ATP = (6R)-10-formyltetrahydrofolate + ADP + phosphate. Its pathway is one-carbon metabolism; tetrahydrofolate interconversion. This Listeria innocua serovar 6a (strain ATCC BAA-680 / CLIP 11262) protein is Formate--tetrahydrofolate ligase.